A 132-amino-acid chain; its full sequence is uncharacterized protein (132 aa).

Disordered stretches follow at residues 36 to 69 (GLAS…PNIS) and 97 to 132 (QIND…PTAR). Ser-101 bears the Phosphoserine mark.

As to quaternary structure, copurifies with proteins HOL1, MMP1, PEX7 and PLB1.

This is an uncharacterized protein from Saccharomyces cerevisiae (strain ATCC 204508 / S288c) (Baker's yeast).